Reading from the N-terminus, the 396-residue chain is Tryptophan synthase beta chain (396 aa).

The residue at position 86 (lysine 86) is an N6-(pyridoxal phosphate)lysine.

This sequence belongs to the TrpB family. Tetramer of two alpha and two beta chains. The cofactor is pyridoxal 5'-phosphate.

It carries out the reaction (1S,2R)-1-C-(indol-3-yl)glycerol 3-phosphate + L-serine = D-glyceraldehyde 3-phosphate + L-tryptophan + H2O. The protein operates within amino-acid biosynthesis; L-tryptophan biosynthesis; L-tryptophan from chorismate: step 5/5. Its function is as follows. The beta subunit is responsible for the synthesis of L-tryptophan from indole and L-serine. This Francisella philomiragia subsp. philomiragia (strain ATCC 25017 / CCUG 19701 / FSC 153 / O#319-036) protein is Tryptophan synthase beta chain.